The following is a 276-amino-acid chain: Small ribosomal subunit protein uS3 (276 aa).

Positions 38-106 (IRRMMTKGME…QVQLNILEVK (69 aa)) constitute a KH type-2 domain. Low complexity predominate over residues 216-228 (NAAARAGNRPARG). Residues 216 to 276 (NAAARAGNRP…PAAESTGTEA (61 aa)) form a disordered region. A compositionally biased stretch (basic and acidic residues) spans 229–245 (GADRPAGRGGRGGERGG). Positions 254-269 (PAAEAPKADAAAAPAA) are enriched in low complexity.

It belongs to the universal ribosomal protein uS3 family. In terms of assembly, part of the 30S ribosomal subunit. Forms a tight complex with proteins S10 and S14.

Functionally, binds the lower part of the 30S subunit head. Binds mRNA in the 70S ribosome, positioning it for translation. The polypeptide is Small ribosomal subunit protein uS3 (Streptomyces griseus subsp. griseus (strain JCM 4626 / CBS 651.72 / NBRC 13350 / KCC S-0626 / ISP 5235)).